Consider the following 325-residue polypeptide: DNA-directed RNA polymerase subunit alpha (325 aa).

The tract at residues 1–231 is alpha N-terminal domain (alpha-NTD); the sequence is MQTSLLKPKI…DQLSVFAALE (231 aa). The segment at 246 to 325 is alpha C-terminal domain (alpha-CTD); it reads IDPILLRPVD…ENWPPAGLDK (80 aa).

It belongs to the RNA polymerase alpha chain family. As to quaternary structure, homodimer. The RNAP catalytic core consists of 2 alpha, 1 beta, 1 beta' and 1 omega subunit. When a sigma factor is associated with the core the holoenzyme is formed, which can initiate transcription.

The enzyme catalyses RNA(n) + a ribonucleoside 5'-triphosphate = RNA(n+1) + diphosphate. In terms of biological role, DNA-dependent RNA polymerase catalyzes the transcription of DNA into RNA using the four ribonucleoside triphosphates as substrates. The sequence is that of DNA-directed RNA polymerase subunit alpha from Paraburkholderia phymatum (strain DSM 17167 / CIP 108236 / LMG 21445 / STM815) (Burkholderia phymatum).